Reading from the N-terminus, the 997-residue chain is Protein Smaug (997 aa).

Residues 1–37 (MKYATGTDNAMTSGISGQTNNSNSASTEMQPTTSTPT) are compositionally biased toward polar residues. Disordered stretches follow at residues 1–69 (MKYA…QSQP) and 329–370 (LCPA…GSSS). Low complexity-rich tracts occupy residues 44–69 (TPTA…QSQP) and 329–338 (LCPASGSRSS). A phosphoserine mark is found at serine 564 and serine 575. Positions 583-763 (EFKPNYIKFH…KDLKFKLSKM (181 aa)) are interaction with cup. The SAM domain maps to 600–654 (GIGLWLKSLRLHKYIELFKNMTYEEMLLITEDFLQSVGVTKGASHKLALCIEKLK). Disordered regions lie at residues 773 to 892 (HVKP…MQQM) and 944 to 972 (GSSD…TSAE). Polar residues-rich tracts occupy residues 802 to 822 (NGSN…NFSL) and 854 to 864 (HQPQYKSSSYP). Serine 970 carries the post-translational modification Phosphoserine.

It belongs to the SMAUG family. Interacts with oskar (osk). Binds to the 3'-UTR of nos. Interacts with cup, which in turn recruits eIF4-E, leading to an indirect interaction between smg and eIF4-E that prevents mRNA translation.

The protein resides in the cytoplasm. Translation regulator that binds to the 3'-UTR of specific mRNAs such as nanos (nos) and prevent their translation. Prevents translation of unlocalized nos in the bulk cytoplasm via the recruitment of cup. The polypeptide is Protein Smaug (Drosophila erecta (Fruit fly)).